The primary structure comprises 524 residues: Solute carrier family 35 member F5 (524 aa).

A disordered region spans residues 1–22 (MVPPRHHPGAGRPGALSSSPPF). Low complexity predominate over residues 13-22 (PGALSSSPPF). 2 helical membrane passes run 69–89 (MALG…SSEL) and 101–121 (FFST…FIVW). Ser207 is subject to Phosphoserine. 8 helical membrane passes run 244–264 (ISFF…EALS), 269–289 (AIVN…AAMF), 297–317 (FTLS…LVNL), 328–348 (TIGS…IVMI), 362–382 (MFFG…FFLL), 396–416 (VVLM…EFLW), 421–441 (FLTS…LSII), and 453–473 (WLFF…TLLC). In terms of domain architecture, EamA spans 253 to 317 (FLANFSYQEA…SIGGVVLVNL (65 aa)).

It belongs to the SLC35F solute transporter family.

The protein localises to the membrane. Putative solute transporter. This chain is Solute carrier family 35 member F5 (SLC35F5), found in Bos taurus (Bovine).